Here is a 169-residue protein sequence, read N- to C-terminus: Sorting nexin-24 (169 aa).

M1 bears the N-acetylmethionine mark. A PX domain is found at 1–125; it reads MEVYIPSFRY…SFDETESEES (125 aa). A 1,2-diacyl-sn-glycero-3-phospho-(1D-myo-inositol-3-phosphate) contacts are provided by R38, S40, K61, and R74. Residues S113 and S116 each carry the phosphoserine modification.

The protein belongs to the sorting nexin family.

It localises to the cytoplasmic vesicle membrane. Functionally, may be involved in several stages of intracellular trafficking. The polypeptide is Sorting nexin-24 (SNX24) (Homo sapiens (Human)).